A 121-amino-acid chain; its full sequence is Large ribosomal subunit protein uL22c (121 aa).

Belongs to the universal ribosomal protein uL22 family. In terms of assembly, part of the 50S ribosomal subunit.

The protein resides in the plastid. The protein localises to the chloroplast. Functionally, this protein binds specifically to 23S rRNA. In terms of biological role, the globular domain of the protein is located near the polypeptide exit tunnel on the outside of the subunit, while an extended beta-hairpin is found that lines the wall of the exit tunnel in the center of the 70S ribosome. This Guillardia theta (Cryptophyte) protein is Large ribosomal subunit protein uL22c (rpl22).